Reading from the N-terminus, the 208-residue chain is Large ribosomal subunit protein uL4 (208 aa).

Residues Ala-51–Lys-79 form a disordered region.

This sequence belongs to the universal ribosomal protein uL4 family. As to quaternary structure, part of the 50S ribosomal subunit.

Its function is as follows. One of the primary rRNA binding proteins, this protein initially binds near the 5'-end of the 23S rRNA. It is important during the early stages of 50S assembly. It makes multiple contacts with different domains of the 23S rRNA in the assembled 50S subunit and ribosome. Functionally, forms part of the polypeptide exit tunnel. The polypeptide is Large ribosomal subunit protein uL4 (Cytophaga hutchinsonii (strain ATCC 33406 / DSM 1761 / CIP 103989 / NBRC 15051 / NCIMB 9469 / D465)).